The primary structure comprises 270 residues: MTVLEDIVAGVREDLATREAATPLAVVKEQALARAGAKSAVDVLRREDAIAVIAEVKRSSPSKGALADIADPAGLAADYEAGGASVVSVLTEQRRFGGSLADLDAVRAAVDVPVLRKDFVVSPYQVWEARAHGADLVLLIVAALEQTVLTSLVERVHSLGMTALVEAHDVGEAHRAIDAGARVLGINARNLHTLEVDRATFAEVVGVVPDGVVKVAESGVRGPHDVLEYARAGADAVLVGESLVTQGNPRGAVADLVAAGAHPALRAVRH.

This sequence belongs to the TrpC family.

It catalyses the reaction 1-(2-carboxyphenylamino)-1-deoxy-D-ribulose 5-phosphate + H(+) = (1S,2R)-1-C-(indol-3-yl)glycerol 3-phosphate + CO2 + H2O. The protein operates within amino-acid biosynthesis; L-tryptophan biosynthesis; L-tryptophan from chorismate: step 4/5. This is Indole-3-glycerol phosphate synthase from Beutenbergia cavernae (strain ATCC BAA-8 / DSM 12333 / CCUG 43141 / JCM 11478 / NBRC 16432 / NCIMB 13614 / HKI 0122).